Reading from the N-terminus, the 564-residue chain is Adenine deaminase (564 aa).

Belongs to the metallo-dependent hydrolases superfamily. Adenine deaminase family. Mn(2+) is required as a cofactor.

The enzyme catalyses adenine + H2O + H(+) = hypoxanthine + NH4(+). This chain is Adenine deaminase, found in Deinococcus geothermalis (strain DSM 11300 / CIP 105573 / AG-3a).